A 57-amino-acid polypeptide reads, in one-letter code: UPF0391 membrane protein XOO1885 (57 aa).

2 helical membrane passes run 4 to 24 (WAIIFAIIGLIAGALGFGGMA) and 33 to 53 (FLFWAGIIIAIVLFVLGMTIA).

This sequence belongs to the UPF0391 family.

It is found in the cell membrane. In Xanthomonas oryzae pv. oryzae (strain KACC10331 / KXO85), this protein is UPF0391 membrane protein XOO1885.